The sequence spans 261 residues: 4-phosphopantoate--beta-alanine ligase (261 aa).

Residues R17, R39, 181 to 183 (DLN), 187 to 188 (RS), and 199 to 200 (NI) contribute to the ATP site.

It belongs to the archaeal phosphopantothenate synthetase family. In terms of assembly, homodimer.

It catalyses the reaction (R)-4-phosphopantoate + beta-alanine + ATP = (R)-4'-phosphopantothenate + AMP + diphosphate + H(+). Its pathway is cofactor biosynthesis; coenzyme A biosynthesis. Its activity is regulated as follows. Activity is not affected by 4'-phosphopantothenate or CoA/acetyl-CoA. Functionally, catalyzes the condensation of (R)-4-phosphopantoate and beta-alanine to 4'-phosphopantothenate in the CoA biosynthesis pathway. Cannot use (R)-pantoate as substrate and thus does not display pantothenate synthetase (PS) activity. Displays strict specificity for its natural substrates, 4-phosphopantoate, ATP and beta-alanine. The polypeptide is 4-phosphopantoate--beta-alanine ligase (Thermococcus kodakarensis (strain ATCC BAA-918 / JCM 12380 / KOD1) (Pyrococcus kodakaraensis (strain KOD1))).